The primary structure comprises 244 residues: Probable hydrolase R7 (244 aa).

Positions 1-20 are cleaved as a signal peptide; it reads MTKPFILLVPGSFAPETIYA. Catalysis depends on charge relay system residues Asp192 and His224. Asn227 carries an N-linked (GlcNAc...) asparagine glycan.

Belongs to the AB hydrolase superfamily.

Its pathway is secondary metabolite biosynthesis. Functionally, probable hydrolase; part of the gene cluster that mediates the biosynthesis of squalestatin S1 (SQS1, also known as zaragozic acid A), a lead compound for the treatment of hyper-cholesterolemia by targeting squalene synthase (SS). Both phenylalanine and benzoic acid are known precursors of SQS1 and so it is unsurprising that the cluster also contains genes potentially involved in benzoate production such as phenyl-alanine ammonia lysase (PAL) M7, which catalyzes the first step in the degradation of phenylalanine, or the NADP-dependent dehydrogenase M3. The cluster contains two PKS encoding genes. The tetraketide synthase is responsible for the biosynthesis of the tetraketide sidechain of SQS1. The biosynthesis must involve 3 rounds of chain extension. After the first and second rounds methyl-transfer occurs, and in all rounds of extension the ketoreductase and dehydratase areactive. The enoyl reductase and C-MeT are not active in the final round of extension. The other PKS is therefore likely to encode squalestatin hexaketide synthase (SQHKS). The hexaketide main chain is initiated by benzoate which is an unusual starter unit for a highly reducing polyketide synthase. The cluster also contains a gene encoding a citrate synthase-like protein R3 presumably involved in linking the hexaketide to the oxaloacetate moiety. Formation of the tetraketide CoA may be catalyzed by the M9 CoA ligase, but the mechanism of release of the tetraketide and the hexaketide from their respective PKS remains unknown, although the cluster encodes a potential esterase (M8) and a possible hydrolase (M10) which could be involved in these processes. Two acyltransferases (AT), M4 and R4, are also encoded in the cluster. M4 is responsible for loading of the tetraketide sidechain from CoA onto the squalestatin core as the final step of biosynthesis. M4 appears to have a broad substrate selectivity for its acyl CoA substrate, allowing the in vitro synthesis of novel squalestatins. The biosynthesis of SQS1 requires several oxidative steps likely performed by oxidoreductases M1, R1 and R2. Finally, in support of the identification of the cluster as being responsible for SQS1 production, the cluster contains a gene encoding a putative squalene synthase (SS) R6, suggesting a likely mechanism for self-resistance. The protein is Probable hydrolase R7 of Phoma sp. (strain ATCC 20986 / MF5453).